Here is a 458-residue protein sequence, read N- to C-terminus: Riboflavin transporter 2 (458 aa).

Transmembrane regions (helical) follow at residues 11–31, 38–58, 73–93, 97–117, and 146–166; these read LFGM…PLIV, WYLP…PLFV, PVIY…AFFW, VPLA…LLSV, and GVSG…VVHC. Residues asparagine 168, asparagine 176, asparagine 182, and asparagine 199 are each glycosylated (N-linked (GlcNAc...) asparagine). Residues 204-224 form a helical membrane-spanning segment; that stretch reads VFFLFLSAMMVVCLAAFLLLN. A disordered region spans residues 249–274; it reads DQALSLSHRPQEEKPMISSPDSHRRA. The next 5 membrane-spanning stretches (helical) occupy residues 279–299, 325–345, 349–369, 388–408, and 417–437; these read FGTG…LAWV, LAAT…MFLP, LVLI…IMAM, IVIA…IIGV, and ALVW…LSMF.

Belongs to the riboflavin transporter family.

Its subcellular location is the cell membrane. It catalyses the reaction riboflavin(in) = riboflavin(out). Functionally, plasma membrane transporter mediating the uptake by cells of the water soluble vitamin B2/riboflavin that plays a key role in biochemical oxidation-reduction reactions of the carbohydrate, lipid, and amino acid metabolism. In Salmo salar (Atlantic salmon), this protein is Riboflavin transporter 2 (rft2).